Here is a 173-residue protein sequence, read N- to C-terminus: Plasmolipin (173 aa).

The Cytoplasmic portion of the chain corresponds to 1–34 (MADFPGKVSTQTSSQEPQRSFAISSSVDMGFIKS). Residues 31 to 160 (FIKSIPGILL…SSYFAYLGWR (130 aa)) form the MARVEL domain. The helical transmembrane segment at 35–55 (IPGILLIAEIVVGLLVWTLIA) threads the bilayer. Topologically, residues 56–67 (STPHYLIPALGW) are extracellular. A helical transmembrane segment spans residues 68-88 (VLFVSITLWLLSIALLVILLL). Over 89-98 (SLHQRLPSVP) the chain is Cytoplasmic. The chain crosses the membrane as a helical span at residues 99 to 119 (WPLVLLVFYSVAALLYLTAFL). The Extracellular portion of the chain corresponds to 120–138 (ANAATVPGGYYQGHLGASA). Residues 139 to 159 (FFGIVETLLYTASSYFAYLGW) traverse the membrane as a helical segment. At 160-173 (RGEGQNAAGSTVPV) the chain is on the cytoplasmic side.

The protein belongs to the MAL family. Forms oligomers. As to expression, expressed in the posterior midgut.

Its subcellular location is the cell membrane. The protein resides in the myelin membrane. It is found in the apical cell membrane. The protein localises to the recycling endosome membrane. It localises to the vesicle. Its function is as follows. Main component of the myelin sheath that plays an important role in myelin membrane biogenesis and myelination. Plays an essential function in apical endocytosis. Plays an important role by activating the Notch signaling pathway, which is essential for cell differentiation and results in correct patterning of the intestinal epithelium, particularly of the posterior gut absorptive cells. The sequence is that of Plasmolipin (pllp) from Danio rerio (Zebrafish).